A 254-amino-acid polypeptide reads, in one-letter code: Ribonuclease HII (254 aa).

Residues 67–254 (IVIAGVDEVG…HRMSFLKNII (188 aa)) form the RNase H type-2 domain. A divalent metal cation contacts are provided by Asp-73, Glu-74, and Asp-170.

The protein belongs to the RNase HII family. Mn(2+) serves as cofactor. Requires Mg(2+) as cofactor.

The protein resides in the cytoplasm. It carries out the reaction Endonucleolytic cleavage to 5'-phosphomonoester.. Functionally, endonuclease that specifically degrades the RNA of RNA-DNA hybrids. This Clostridium acetobutylicum (strain ATCC 824 / DSM 792 / JCM 1419 / IAM 19013 / LMG 5710 / NBRC 13948 / NRRL B-527 / VKM B-1787 / 2291 / W) protein is Ribonuclease HII.